Here is a 416-residue protein sequence, read N- to C-terminus: Serine hydroxymethyltransferase (416 aa).

Residues Leu-121 and 125–127 contribute to the (6S)-5,6,7,8-tetrahydrofolate site; that span reads GHL. Lys-230 is subject to N6-(pyridoxal phosphate)lysine. 355–357 provides a ligand contact to (6S)-5,6,7,8-tetrahydrofolate; sequence SPF.

This sequence belongs to the SHMT family. In terms of assembly, homodimer. Requires pyridoxal 5'-phosphate as cofactor.

Its subcellular location is the cytoplasm. It catalyses the reaction (6R)-5,10-methylene-5,6,7,8-tetrahydrofolate + glycine + H2O = (6S)-5,6,7,8-tetrahydrofolate + L-serine. The protein operates within one-carbon metabolism; tetrahydrofolate interconversion. Its pathway is amino-acid biosynthesis; glycine biosynthesis; glycine from L-serine: step 1/1. In terms of biological role, catalyzes the reversible interconversion of serine and glycine with tetrahydrofolate (THF) serving as the one-carbon carrier. This reaction serves as the major source of one-carbon groups required for the biosynthesis of purines, thymidylate, methionine, and other important biomolecules. Also exhibits THF-independent aldolase activity toward beta-hydroxyamino acids, producing glycine and aldehydes, via a retro-aldol mechanism. The chain is Serine hydroxymethyltransferase from Streptococcus thermophilus (strain CNRZ 1066).